A 1872-amino-acid chain; its full sequence is MALEEVPSVSRDLDHSALRALSSASPSSLPSSCSRSTTSLLFQSKGIEFRLSIPDTFLSLVEPHRNAFLASYSTQGNTQSPLELALSFLYFLLDQKVSPLVLSSVLRAFNLEFLGNRSEIHSLIADLTPIPKQRQRWLGIYYRFLEASDDKRAEIPLSSIFQHARTNEFQLMAVFGGQGECSRTCLNEFAELYSSYEPMLRRLVGVIGPCLYNLSTSDEYSSYYRNQPLDLKAWITDENHVPDLGFVASAPVSVPVIGALSLARYCVTCHITGCNPGLMRSMLRTATGHSQGLLAAIVVAVSHSWDSFYQATEEVIELLFRLGWECHHAAPCSMVPAANYADVDGANGPSYMLSLRGLKRQETEATIDHVNASLPEDKRLYLALINAYDQFVVAGPVASLLRLESHLVEITSKDIDQSRIPFRDRKPYIQHSFLPVSTPFHTPYLTRAAARVKKQFAARPIPTRRLAIPVYHTHTGLDLRKQGGCALSIAIDAIASEPCNWPCAVASYHASHILTFDRGGLAPLIKRVREGCGVRVVQVADLDTRDSEMATMRDLFATKLLPTSTKLQSWGQQFRPGLASGPKIQLETRLNRVLGAPPIMVAGMTPTTVHPDFVAAIMNAGYHAELAGGGYHNASAMEAAIYDLVSSIPKERGITCNLIYANPRSISWQIELLRRLSNGNVRIDGLTIGAGVPSLTVASEYIETLGLRHISFKPGSVAAIRKVVEIAREHPDFPVILQWTGGRGGGHHSFEDFHAPIIATYGIIRQEPNVYLVAGSGFGDSDSVYPYLTGSWSVAMGHPAMPFDGILLGSRMMVAKEAHTSPAVRRIIAATPGVSDSEWEKTYSGPAGGVITVTSEMGEPIHKIATRGVCLWADLDKTVFSLSRRDRLTYLAQHRRSIIQRLNADFAKPWFGCNSDGEAVDLEDMTYLEVLKRLTALMFVPNKQWIDASYIEFTMTIAQRWLQRLQFDSEAAASLTISLLRKAPDRFLAIFADVCPTAEGDLLNPEDISFFLMQCKTPGRKPVNFIPALDDDFEFYFKKDSLWQAEDVDAVLDQDAERVCILHGPIAARYSKSDSEPAGYILDSILNGVVARLRETSTAEMLLPKLERGHTTPASWSTLSLTERDTSEETSDTSITSLSELIENHSFSSGGVDSVPRPSHPLWMRALLEDDVVLQGTLRQKNPFRDLIQSSPNTVVNYNQDSSELMVTAQEPYHISSFMRAVCHDGVMDKRNERIKSFYSLLWFGHDCDTSQSLNGVFYGPDITLTEDLLDEYNATIGPAYSDHRQMVPSTDVLPISMGIIIAWDVISRPLILRQIGGDLLRLVHRSNTFEYYSDTRLRLGDSVSSRSEVQAVYDDDGGRVVIVEAQILRSRVPVMTVTSTFLFRGSKGTTVPAFRRAREQKWTYDVTSEFEESILLSRNWFRPCDPSLTLVGKSMIFDLNSLVKYHDDGNMELHVQGTAMSQTNGQQQKLAIVDFRNTCTGNPVLDFLQRRGKLAEPRTEFKIPGWAGKSTMDIQMPPSNEPYAQLSKDFNPIHTSPIFSSLAGVPGTLCHGMCTSAIAERVLEHLGLGGDRERLRRFEARFTDMVMPLEKLVVEIKHTGMVDGRMCFSILAKRKETDERVLEGDAEVEQPRTAYLFTGQGSQSKGMGMDLYKTSTGQFLLTNKGGLFWTSCKTTQSPLPIRQKYLDITTEVVLPNGKRVQKPVFPGLTPTSTSYTFRHPRGLLYSTQFAQPAILLFEAAAFAELRAKGYVSHGAVYAGHSLGEFGALSALSRSVPTGALVELAFYRGSVMQASVASDNDGGTTYGMVAMNPKRVGTFFTQTTLDRLVSQIAAQSQELLEIVNFNIEGEQYVCSGTIDRPISGGTWPSLSG.

Positions 174 to 425 (VFGGQGECSR…DQSRIPFRDR (252 aa)) are acetyltransferase (AT) domain. Residues 591-836 (NRVLGAPPIM…IIAATPGVSD (246 aa)) form an enoyl reductase (ER) domain region. A disordered region spans residues 1111-1132 (TTPASWSTLSLTERDTSEETSD). Residues 1158–1597 (PSHPLWMRAL…MPLEKLVVEI (440 aa)) form a dehydratase (DH) domain region. Residues 1518-1617 (PPSNEPYAQL…CFSILAKRKE (100 aa)) form the MaoC-like domain.

The protein belongs to the fungal fatty acid synthetase subunit beta family. In terms of assembly, [Alpha(6)beta(6)] hexamers of two multifunctional subunits (alpha and beta).

It catalyses the reaction acetyl-CoA + n malonyl-CoA + 2n NADPH + 4n H(+) = a long-chain-acyl-CoA + n CoA + n CO2 + 2n NADP(+).. The catalysed reaction is holo-[ACP] + acetyl-CoA = acetyl-[ACP] + CoA. The enzyme catalyses holo-[ACP] + malonyl-CoA = malonyl-[ACP] + CoA. It carries out the reaction a (3R)-hydroxyacyl-[ACP] = a (2E)-enoyl-[ACP] + H2O. It catalyses the reaction a 2,3-saturated acyl-[ACP] + NAD(+) = a (2E)-enoyl-[ACP] + NADH + H(+). The catalysed reaction is (9Z)-octadecenoyl-[ACP] + H2O = (9Z)-octadecenoate + holo-[ACP] + H(+). The protein operates within secondary metabolite biosynthesis. In terms of biological role, fatty acid synthase beta subunit; part of the pki gene cluster that mediates the biosynthesis of 2,4-dihydroxy-3-methyl-6-(2-oxoundecyl)benzaldehyde. The first step in the pathway is the generation of the decanoyl starter unit by the FAS composed of subunits pkiB and pkiC, which is then transferred directly from the FAS to the SAT domain of the non-reducing polyketide synthase pkiA. PkiA condenses the decanoyyl starter unit with 4 malonyl-CoA units and performs one methylation step to yield 2,4-dihydroxy-3-methyl-6-(2-oxoundecyl)benzaldehyde. The protein is Fatty acid synthase beta subunit pkiC of Emericella nidulans (strain FGSC A4 / ATCC 38163 / CBS 112.46 / NRRL 194 / M139) (Aspergillus nidulans).